Consider the following 364-residue polypeptide: uncharacterized protein (364 aa).

This is an uncharacterized protein from Acanthamoeba polyphaga mimivirus (APMV).